The sequence spans 995 residues: Meckelin (995 aa).

An N-terminal signal peptide occupies residues Met-1–Ala-36. Residues Gln-37–Gly-280 form a cysteine-rich region. Topologically, residues Gln-37–Glu-519 are extracellular. 11 disulfide bridges follow: Cys-49/Cys-62, Cys-65/Cys-78, Cys-80/Cys-97, Cys-100/Cys-114, Cys-117/Cys-127, Cys-129/Cys-150, Cys-153/Cys-170, Cys-173/Cys-184, Cys-186/Cys-197, Cys-237/Cys-246, and Cys-253/Cys-268. The N-linked (GlcNAc...) asparagine glycan is linked to Asn-141. Asn-179 carries N-linked (GlcNAc...) asparagine glycosylation. N-linked (GlcNAc...) asparagine glycosylation is present at Asn-242. A glycan (N-linked (GlcNAc...) asparagine) is linked at Asn-318. Residues Cys-357 and Cys-378 are joined by a disulfide bond. A helical transmembrane segment spans residues Ala-520–Arg-548. Topologically, residues Arg-549 to Gln-558 are cytoplasmic. The helical transmembrane segment at Thr-559–Phe-590 threads the bilayer. Residues Lys-591 to Pro-603 lie on the Extracellular side of the membrane. The chain crosses the membrane as a helical span at residues Ile-604–Gln-631. Residues Ile-632–Thr-670 lie on the Cytoplasmic side of the membrane. Positions Tyr-671–Glu-679 form an intramembrane region, helical. A discontinuously helical membrane pass occupies residues Tyr-671–Val-701. The stretch at Ile-680–Ser-688 is an intramembrane region. The helical intramembrane region spans Leu-689 to Val-701. Over Val-702–Leu-731 the chain is Extracellular. Positions Arg-732–Arg-757 form an intramembrane region, helical. The chain crosses the membrane as a discontinuously helical span at residues Arg-732–Ser-771. Residues Phe-758–Lys-762 lie within the membrane without spanning it. The helical intramembrane region spans Ile-763–Ser-771. Residues Met-772–Ser-926 lie on the Cytoplasmic side of the membrane. Residues Gly-828–Ser-917 are a coiled coil. The helical intramembrane region spans Phe-927–Ser-929. The chain crosses the membrane as a discontinuously helical span at residues Phe-927–Leu-952. An intramembrane segment occupies Val-930 to Glu-936. An intramembrane region (helical) is located at residues Ala-937–Leu-952. The Extracellular portion of the chain corresponds to Ala-953–Phe-957. The helical transmembrane segment at Ile-958 to Ser-985 threads the bilayer. Topologically, residues Lys-986 to Ile-995 are cytoplasmic.

In terms of assembly, homodimer. Part of the tectonic-like complex (also named B9 complex). Interacts with DNAJB9, DNAJC10 and mutated SFTPC. Interacts with SYNE2 during the early establishment of cell polarity. Interacts (via C-terminus) with FLNA. Interacts with TMEM218. Interacts with WNT5A. Interacts with ROR2. In terms of tissue distribution, widely expressed in adult and fetal tissues. Expressed at higher level in spinal cord.

It localises to the cell membrane. Its subcellular location is the endoplasmic reticulum membrane. The protein localises to the cell projection. It is found in the cilium. The protein resides in the cytoplasm. It localises to the cytoskeleton. Its subcellular location is the cilium basal body. In terms of biological role, required for ciliary structure and function. Part of the tectonic-like complex which is required for tissue-specific ciliogenesis and may regulate ciliary membrane composition. Involved in centrosome migration to the apical cell surface during early ciliogenesis. Involved in the regulation of cilia length and appropriate number through the control of centrosome duplication. Is a key regulator of stereociliary bundle orientation. Required for epithelial cell branching morphology. Essential for endoplasmic reticulum-associated degradation (ERAD) of surfactant protein C (SFTPC). Involved in the negative regulation of canonical Wnt signaling, and activation of the non-canonical cascade stimulated by WNT5A. In non-canonical Wnt signaling, it may act as ROR2 coreceptor. The sequence is that of Meckelin (TMEM67) from Homo sapiens (Human).